Consider the following 307-residue polypeptide: UDP-N-acetylenolpyruvoylglucosamine reductase (307 aa).

The FAD-binding PCMH-type domain occupies 33-197 (TGGNADFYIT…LEAAFTLAPG (165 aa)). Arginine 176 is a catalytic residue. Serine 226 (proton donor) is an active-site residue. Glutamate 296 is a catalytic residue.

Belongs to the MurB family. FAD serves as cofactor.

The protein localises to the cytoplasm. It carries out the reaction UDP-N-acetyl-alpha-D-muramate + NADP(+) = UDP-N-acetyl-3-O-(1-carboxyvinyl)-alpha-D-glucosamine + NADPH + H(+). It participates in cell wall biogenesis; peptidoglycan biosynthesis. Its function is as follows. Cell wall formation. This Staphylococcus aureus (strain COL) protein is UDP-N-acetylenolpyruvoylglucosamine reductase.